We begin with the raw amino-acid sequence, 460 residues long: Crocetin glucosyltransferase 2 (460 aa).

The active-site Proton acceptor is H19. Residue H19 participates in an anthocyanidin binding. The UDP-alpha-D-glucose site is built by T133, Q333, H348, W351, N352, S353, E356, D372, and Q373.

The protein belongs to the UDP-glycosyltransferase family. Mainly expressed in fully developed stigmas.

It carries out the reaction crocetin + UDP-alpha-D-glucose = beta-D-glucosyl crocetin + UDP. The enzyme catalyses beta-D-glucosyl crocetin + UDP-alpha-D-glucose = bis(beta-D-glucosyl) crocetin + UDP. It catalyses the reaction beta-D-gentiobiosyl crocetin + UDP-alpha-D-glucose = beta-D-gentiobiosyl beta-D-glucosyl crocetin + UDP. In terms of biological role, crocetin glucosyltransferase involved in the synthesis of crocin, one of the apocarotenoids responsible for the color and bitter taste of saffron. This Crocus sativus (Saffron) protein is Crocetin glucosyltransferase 2 (GLT2).